Reading from the N-terminus, the 241-residue chain is Caffeoyl-CoA O-methyltransferase (241 aa).

Residue Met1 is modified to Blocked amino end (Met). Lys15 contacts substrate. S-adenosyl-L-methionine contacts are provided by residues Thr57, Glu79, 81–82 (GV), Ser87, Asp105, and Ala134. Asp157 is a substrate binding site. An a divalent metal cation-binding site is contributed by Asp157. Asp159 contacts S-adenosyl-L-methionine. Asp183 and Asn184 together coordinate a divalent metal cation. Asn188 lines the substrate pocket.

This sequence belongs to the class I-like SAM-binding methyltransferase superfamily. Cation-dependent O-methyltransferase family. CCoAMT subfamily. As to quaternary structure, homodimer. It depends on a divalent metal cation as a cofactor. Roots and leaves.

It catalyses the reaction (E)-caffeoyl-CoA + S-adenosyl-L-methionine = (E)-feruloyl-CoA + S-adenosyl-L-homocysteine + H(+). It functions in the pathway aromatic compound metabolism; phenylpropanoid biosynthesis. Methylates caffeoyl-CoA to feruloyl-CoA and 5-hydroxyferuloyl-CoA to sinapoyl-CoA. Plays a role in the synthesis of feruloylated polysaccharides. Involved in the reinforcement of the plant cell wall. Also involved in the responding to wounding or pathogen challenge by the increased formation of cell wall-bound ferulic acid polymers. This chain is Caffeoyl-CoA O-methyltransferase, found in Petroselinum crispum (Parsley).